Here is a 694-residue protein sequence, read N- to C-terminus: Junctophilin-2 (694 aa).

The Cytoplasmic portion of the chain corresponds to 1–672 (MSGGRFDFDD…EVEVEEVPNT (672 aa)). MORN repeat units lie at residues 14 to 36 (YCGG…KGQG), 38 to 59 (YSGS…SGNT), 60 to 79 (FEGY…TKGR), 82 to 104 (YKGE…SSGA), 106 to 128 (YEGT…DGGT), and 129 to 151 (YQGQ…PYGM). Residues Ser-162 and Ser-165 each carry the phosphoserine modification. 2 disordered regions span residues 164-192 (SSLR…ALPS) and 231-278 (RAES…AAPF). A compositionally biased stretch (low complexity) spans 176-189 (APDSPASPAADGPA). The segment covering 235 to 244 (RTSVGSQRSR) has biased composition (polar residues). Residues 250-267 (SDLSSGASDAASTASLGE) are compositionally biased toward low complexity. MORN repeat units follow at residues 290-312 (YMGE…SGLR) and 313-335 (YEGE…DGHR). The Bipartite nuclear localization signal motif lies at 350–364 (KRRVLPLKSNKVRQK). Residues Ser-445, Ser-447, and Ser-466 each carry the phosphoserine modification. Residues 448–663 (LLEPPDRGAA…KEAAQAAEAE (216 aa)) form a disordered region. The segment covering 467 to 476 (PQLHERETPR) has biased composition (basic and acidic residues). Thr-474 carries the post-translational modification Phosphothreonine. The span at 478–491 (EGGPPSPAGTPPQP) shows a compositional bias: pro residues. Residue Ser-483 is modified to Phosphoserine. Thr-487 is subject to Phosphothreonine. The Nuclear localization signal signature appears at 492 to 496 (KRPRP). The segment covering 522–540 (SRPATPAAAGAGRRSPARP) has biased composition (low complexity). Residues Ser-536, Ser-542, Ser-596, and Ser-600 each carry the phosphoserine modification. The span at 589–610 (PEAADPDSAPASPATAPGQAPA) shows a compositional bias: low complexity. A helical; Anchor for type IV membrane protein transmembrane segment spans residues 673–693 (VLICMVILLNIGLAILFVHLL).

Belongs to the junctophilin family. In terms of assembly, interacts with TRPC3. Interacts with BAG5 and HSPA8; the interaction with HSPA8 is increased in the presence of BAG5. Junctophilin-2 N-terminal fragment: Interacts with MEF2C. Post-translationally, proteolytically cleaved by calpain in response to cardiac stress. The major cleavage site takes place at the C-terminus and leads to the release of the Junctophilin-2 N-terminal fragment chain (JP2NT). In terms of processing, phosphorylation on Ser-165, probably by PKC, affects RYR1-mediated calcium ion release, interaction with TRPC3, and skeletal muscle myotubule development.

Its subcellular location is the cell membrane. It is found in the sarcoplasmic reticulum membrane. The protein resides in the endoplasmic reticulum membrane. The protein localises to the nucleus. Its function is as follows. Membrane-binding protein that provides a structural bridge between the plasma membrane and the sarcoplasmic reticulum and is required for normal excitation-contraction coupling in cardiomyocytes. Provides a structural foundation for functional cross-talk between the cell surface and intracellular Ca(2+) release channels by maintaining the 12-15 nm gap between the sarcolemma and the sarcoplasmic reticulum membranes in the cardiac dyads. Necessary for proper intracellular Ca(2+) signaling in cardiac myocytes via its involvement in ryanodine receptor-mediated calcium ion release. Contributes to the construction of skeletal muscle triad junctions. Transcription repressor required to safeguard against the deleterious effects of cardiac stress. Generated following cleavage of the Junctophilin-2 chain by calpain in response to cardiac stress in cardiomyocytes. Following cleavage and release from the membrane, translocates to the nucleus, binds DNA and represses expression of genes implicated in cell growth and differentiation, hypertrophy, inflammation and fibrosis. Modifies the transcription profile and thereby attenuates pathological remodeling in response to cardiac stress. Probably acts by competing with MEF2 transcription factors and TATA-binding proteins. The sequence is that of Junctophilin-2 (JPH2) from Oryctolagus cuniculus (Rabbit).